The primary structure comprises 183 residues: Ribulose bisphosphate carboxylase small subunit, chloroplastic 3 (183 aa).

The transit peptide at 1-43 (MATTMLNRSVIVNKEVAKTPNFPRATKNNKGFASNAAVQKCRD) directs the protein to the chloroplast.

It belongs to the RuBisCO small chain family. In terms of assembly, heterohexadecamer of 8 large and 8 small subunits.

The protein localises to the plastid. It is found in the chloroplast. Its function is as follows. RuBisCO catalyzes two reactions: the carboxylation of D-ribulose 1,5-bisphosphate, the primary event in carbon dioxide fixation, as well as the oxidative fragmentation of the pentose substrate. Both reactions occur simultaneously and in competition at the same active site. Although the small subunit is not catalytic it is essential for maximal activity. This Acetabularia peniculus (Green alga) protein is Ribulose bisphosphate carboxylase small subunit, chloroplastic 3.